The chain runs to 309 residues: Homoserine kinase (309 aa).

91-101 (PIGSGLGSSAC) contacts ATP.

It belongs to the GHMP kinase family. Homoserine kinase subfamily.

It is found in the cytoplasm. It carries out the reaction L-homoserine + ATP = O-phospho-L-homoserine + ADP + H(+). Its pathway is amino-acid biosynthesis; L-threonine biosynthesis; L-threonine from L-aspartate: step 4/5. In terms of biological role, catalyzes the ATP-dependent phosphorylation of L-homoserine to L-homoserine phosphate. The chain is Homoserine kinase from Yersinia enterocolitica serotype O:8 / biotype 1B (strain NCTC 13174 / 8081).